Reading from the N-terminus, the 150-residue chain is Large ribosomal subunit protein uL15 (150 aa).

Residues 1 to 57 (MSLTLQSLKPQKGARRRKMRKGRGIAAGQGASCGFGMRGQKSRSGRPTRPGFEGGQM) form a disordered region. The span at 12–23 (KGARRRKMRKGR) shows a compositional bias: basic residues. Residues 25 to 37 (IAAGQGASCGFGM) are compositionally biased toward gly residues.

It belongs to the universal ribosomal protein uL15 family. In terms of assembly, part of the 50S ribosomal subunit.

Its function is as follows. Binds to the 23S rRNA. This Synechococcus sp. (strain RCC307) protein is Large ribosomal subunit protein uL15.